The following is a 446-amino-acid chain: Phosphoglucosamine mutase (446 aa).

Ser-102 acts as the Phosphoserine intermediate in catalysis. Mg(2+)-binding residues include Ser-102, Asp-241, Asp-243, and Asp-245. Ser-102 carries the phosphoserine modification.

It belongs to the phosphohexose mutase family. The cofactor is Mg(2+). Activated by phosphorylation.

It carries out the reaction alpha-D-glucosamine 1-phosphate = D-glucosamine 6-phosphate. Catalyzes the conversion of glucosamine-6-phosphate to glucosamine-1-phosphate. This chain is Phosphoglucosamine mutase, found in Idiomarina loihiensis (strain ATCC BAA-735 / DSM 15497 / L2-TR).